Here is a 258-residue protein sequence, read N- to C-terminus: Membrane-associated protein Vipp1 (258 aa).

The disordered stretch occupies residues Met-217–Leu-258. The segment covering Pro-223–Lys-239 has biased composition (polar residues). The span at Asp-249 to Leu-258 shows a compositional bias: basic and acidic residues.

Belongs to the PspA/Vipp/IM30 family. As to quaternary structure, polymerizes to form rings, filaments and ribbons. Rings are formed by stacked rungs that tilt to give a dome-shaped curvature. Rings form with symmetries ranging from C11 (55 subunits) to C17 (119 subunits).

The protein resides in the cell inner membrane. In terms of biological role, a membrane remodeling protein capable of forming rings and/or filaments on membranes, which then curve and tubulate the bilayer. Rings will form on liposomes, altering their positive curvature so the lipid bilayer is remodeled into a negative curve as the membrane enters the ring. Ring stacks of varying lengths can be seen joining isolated liposomes. A lipid monolayer can be drawn into the center of the rings. Required for thylakoid formation. The polypeptide is Membrane-associated protein Vipp1 (Nostoc punctiforme (strain ATCC 29133 / PCC 73102)).